The sequence spans 281 residues: Pantothenate synthetase (281 aa).

26–33 (MGSLHEGH) is an ATP binding site. Catalysis depends on histidine 33, which acts as the Proton donor. Glutamine 57 provides a ligand contact to (R)-pantoate. Residue glutamine 57 participates in beta-alanine binding. Residue 144-147 (GKKD) participates in ATP binding. Residue glutamine 150 participates in (R)-pantoate binding. ATP-binding positions include alanine 173 and 181 to 184 (LSSR).

It belongs to the pantothenate synthetase family. In terms of assembly, homodimer.

The protein localises to the cytoplasm. The catalysed reaction is (R)-pantoate + beta-alanine + ATP = (R)-pantothenate + AMP + diphosphate + H(+). Its pathway is cofactor biosynthesis; (R)-pantothenate biosynthesis; (R)-pantothenate from (R)-pantoate and beta-alanine: step 1/1. Functionally, catalyzes the condensation of pantoate with beta-alanine in an ATP-dependent reaction via a pantoyl-adenylate intermediate. The protein is Pantothenate synthetase of Methylibium petroleiphilum (strain ATCC BAA-1232 / LMG 22953 / PM1).